Reading from the N-terminus, the 134-residue chain is Transcription antitermination protein NusB (134 aa).

It belongs to the NusB family.

Involved in transcription antitermination. Required for transcription of ribosomal RNA (rRNA) genes. Binds specifically to the boxA antiterminator sequence of the ribosomal RNA (rrn) operons. The sequence is that of Transcription antitermination protein NusB from Shewanella sp. (strain W3-18-1).